A 454-amino-acid chain; its full sequence is Phenylalanine--tRNA ligase, mitochondrial (454 aa).

Residues 141–144, Arg163, 170–172, 177–179, Glu266, and Phe291 contribute to the substrate site; these read SAHQ, VHY, and QME. Residues 327–347 are disordered; that stretch reads KSISTSSSSSSSSSSSSSSTL. Over residues 328 to 347 the composition is skewed to low complexity; sequence SISTSSSSSSSSSSSSSSTL. An FDX-ACB domain is found at 361–454; sequence SKYPSCFKDV…LENHLSVKLR (94 aa).

The protein belongs to the class-II aminoacyl-tRNA synthetase family. As to quaternary structure, monomer.

It is found in the mitochondrion matrix. It catalyses the reaction tRNA(Phe) + L-phenylalanine + ATP = L-phenylalanyl-tRNA(Phe) + AMP + diphosphate + H(+). Is responsible for the charging of tRNA(Phe) with phenylalanine in mitochondrial translation. This Dictyostelium discoideum (Social amoeba) protein is Phenylalanine--tRNA ligase, mitochondrial (mpheS).